The chain runs to 479 residues: MSIVVKNNIHWVGQRDWEVRDFHGTEYKTLRGSSYNSYLIREEKNVLIDTVDHKFSREFVQNLRNEIDLADIDYIVINHAEEDHAGALTELMAQIPDTPIYCTANAIDSINGHHHHPEWNFNVVKTGDTLDIGNGKQLIFVETPMLHWPDSMMTYLTGDAVLFSNDAFGQHYCDEHLFNDEVDQTELFEQCQRYYANILTPFSRLVTPKITEILGFNLPVDMIATSHGVVWRDNPTQIVELYLKWAADYQEDRITIFYDTMSNNTRMMADAIAQGIAETDPRVAVKIFNVARSDKNEILTNVFRSKGVLVGTSTMNNVMMPKIAGLVEEMTGLRFRNKRASAFGSHGWSGGAVDRLSTRLQDAGFEMSLSLKAKWRPDQDALELCREHGREIARQWALAPLPQSTVNTVVKEETSATTTADLGPRMQCSVCQWIYDPAKGEPMQDVAPGTPWSEVPDNFLCPECSLGKDVFEELASEAK.

The interval leucine 30–isoleucine 210 is zinc metallo-hydrolase. Residues histidine 79, glutamate 81, aspartate 83, histidine 147, aspartate 166, and histidine 227 each contribute to the Fe cation site. Residues isoleucine 254–alanine 393 enclose the Flavodoxin-like domain. FMN contacts are provided by residues threonine 260–asparagine 264 and alanine 342–leucine 369. The Rubredoxin-like domain occupies glycine 423–leucine 474. Fe cation is bound by residues cysteine 428, cysteine 431, cysteine 461, and cysteine 464.

This sequence in the N-terminal section; belongs to the zinc metallo-hydrolase group 3 family. As to quaternary structure, homotetramer. Fe cation serves as cofactor. Requires FMN as cofactor.

It localises to the cytoplasm. It participates in nitrogen metabolism; nitric oxide reduction. Its function is as follows. Anaerobic nitric oxide reductase; uses NADH to detoxify nitric oxide (NO), protecting several 4Fe-4S NO-sensitive enzymes. Has at least 2 reductase partners, only one of which (NorW, flavorubredoxin reductase) has been identified. NO probably binds to the di-iron center; electrons enter from the NorW at rubredoxin and are transferred sequentially to the FMN center and the di-iron center. Also able to function as an aerobic oxygen reductase. The polypeptide is Anaerobic nitric oxide reductase flavorubredoxin (Escherichia coli O139:H28 (strain E24377A / ETEC)).